Here is a 3907-residue protein sequence, read N- to C-terminus: Cyclo-acetoacetyl-L-tryptophan synthase (3907 aa).

The region spanning 2-436 (KTPIAVVGTA…GTNAHAIIES (435 aa)) is the Ketosynthase family 3 (KS3) domain. Active-site for beta-ketoacyl synthase activity residues include Cys-176, His-313, and His-356. The interval 555 to 870 (IFTGQGAQWA…SLLRRGQNDL (316 aa)) is malonyl-CoA:ACP transacylase (MAT) domain. The N-terminal hotdog fold stretch occupies residues 937–1074 (HPLLGRRSAD…ARLTLHLGDA (138 aa)). Positions 937 to 1236 (HPLLGRRSAD…GLVMKSVPQP (300 aa)) are dehydratase (DH) domain. One can recognise a PKS/mFAS DH domain in the interval 937–1239 (HPLLGRRSAD…MKSVPQPDTS (303 aa)). The tract at residues 1092–1239 (LAPVDVADLY…MKSVPQPDTS (148 aa)) is C-terminal hotdog fold. A methyltransferase (MT) domain region spans residues 1386-1573 (AAMFSQLSKD…FSGIDHIFHD (188 aa)). A ketoreductase (KR)domain region spans residues 2064–2238 (GTYFMIDMAT…VGSVMALGMV (175 aa)). A disordered region spans residues 2324 to 2352 (TKEGQYAEQEDSPSLLVPDEQLQESGPGR). The region spanning 2356–2430 (DDLLARLSGK…LCEKAVPKPN (75 aa)) is the Carrier 1 domain. Ser-2390 is modified (O-(pantetheine 4'-phosphoryl)serine). Residues 2504–2926 (MSPHQSQIWF…SSNPLISVQS (423 aa)) are condensation. The segment at 2959–3359 (FQDMVDQYGD…GSLILLGRMD (401 aa)) is adenylation. The 76-residue stretch at 3474–3549 (KRLTLGEGEL…QMALKVDARK (76 aa)) folds into the Carrier 2 domain. O-(pantetheine 4'-phosphoryl)serine is present on Ser-3509. The segment at 3594–3813 (LTGSTSFLGR…DFQKVEIIAE (220 aa)) is reductase (RED) domain.

In the C-terminal section; belongs to the NRP synthetase family.

The enzyme catalyses L-tryptophan + malonyl-CoA + acetyl-CoA = cyclo-acetoacetyl-L-tryptophan + CO2 + 2 CoA + H2O. It participates in secondary metabolite biosynthesis. Its function is as follows. Hybrid PKS-NRPS synthetase; part of the gene cluster that mediates the biosynthesis of the fungal neurotoxin cyclopiazonic acid (CPA), a nanomolar inhibitor of Ca(2+)-ATPase with a unique pentacyclic indole tetramic acid scaffold. The hybrid two module polyketide synthase-nonribosomal peptide synthetase (PKS-NRPS) cpaS incorporates acetyl-CoA, malonyl-CoA, and tryptophan (Trp) and utilizes a C-terminal redox-incompetent reductase domain to make and release the tryptophan tetramic acid, cyclo-acetoacetyl-L-tryptophan (c-AATrp), as the first intermediate in the pathway. CpaS catalyzes a Dieckmann-type cyclization on the N-acetoacetyl-Trp intermediate bound in thioester linkage to the phosphopantetheinyl arm of the T domain to form and release c-AATrp. CpaD then regiospecifically dimethylallylates c-AATrp to form beta-cyclopiazonic acid. CpaD discriminates against free Trp but accepts tryptophan-containing thiohydantoins, diketopiperazines, and linear peptides as substrates for C4-prenylation and also acts as regiospecific O-dimethylallyltransferase (DMAT) on a tyrosine-derived tetramic acid. The beta-cyclopiazonate dehydrogenase cpaO then carries out the dehydrogenation of beta-CPA to yield an unstable enimine product, which is captured by intramolecular cyclization to create the pentacyclic fused scaffold of alpha-cyclopiazonate. Finally, the cytochrome P450 monooxygenase cpaH mediates the conversion of CPA into the less toxic 2-oxocyclopiazonic acid, the end product of the CPA pathway in A.oryza. This Aspergillus oryzae (Yellow koji mold) protein is Cyclo-acetoacetyl-L-tryptophan synthase.